Consider the following 237-residue polypeptide: Methylosome subunit pICln (237 aa).

At S2 the chain carries N-acetylserine. Residues S102, S144, S193, and S195 each carry the phosphoserine modification. Position 223 is a phosphothreonine (T223).

The protein belongs to the pICln (TC 1.A.47) family. Component of the methylosome, a 20S complex containing at least PRMT5/SKB1, WDR77/MEP50 and CLNS1A/pICln. May mediate SNRPD1 and SNRPD3 methylation. Forms a 6S pICln-Sm complex composed of CLNS1A/pICln, SNRPD1, SNRPD2, SNRPE, SNRPF and SNRPG; ring-like structure where CLNS1A/pICln mimics additional Sm proteins and which is unable to assemble into the core snRNP. Interacts with LSM10 and LSM11.

It localises to the cytoplasm. The protein resides in the cytosol. It is found in the nucleus. Its subcellular location is the cytoskeleton. Involved in both the assembly of spliceosomal snRNPs and the methylation of Sm proteins. Chaperone that regulates the assembly of spliceosomal U1, U2, U4 and U5 small nuclear ribonucleoproteins (snRNPs), the building blocks of the spliceosome, and thereby plays an important role in the splicing of cellular pre-mRNAs. Most spliceosomal snRNPs contain a common set of Sm proteins SNRPB, SNRPD1, SNRPD2, SNRPD3, SNRPE, SNRPF and SNRPG that assemble in a heptameric protein ring on the Sm site of the small nuclear RNA to form the core snRNP (Sm core). In the cytosol, the Sm proteins SNRPD1, SNRPD2, SNRPE, SNRPF and SNRPG are trapped in an inactive 6S pICln-Sm complex by the chaperone CLNS1A that controls the assembly of the core snRNP. Dissociation by the SMN complex of CLNS1A from the trapped Sm proteins and their transfer to an SMN-Sm complex triggers the assembly of core snRNPs and their transport to the nucleus. The chain is Methylosome subunit pICln (CLNS1A) from Pongo abelii (Sumatran orangutan).